A 176-amino-acid polypeptide reads, in one-letter code: Inner membrane-spanning protein YciB (176 aa).

A run of 6 helical transmembrane segments spans residues 3–23 (FLFD…WGIF), 24–44 (TATA…AFRH), 49–69 (TMLW…LVLH), 72–92 (KFIQ…LLAA), 121–141 (LAWA…VHNF), and 149–169 (FKLF…SLWL).

This sequence belongs to the YciB family.

It localises to the cell inner membrane. In terms of biological role, plays a role in cell envelope biogenesis, maintenance of cell envelope integrity and membrane homeostasis. The polypeptide is Inner membrane-spanning protein YciB (Burkholderia cenocepacia (strain ATCC BAA-245 / DSM 16553 / LMG 16656 / NCTC 13227 / J2315 / CF5610) (Burkholderia cepacia (strain J2315))).